The primary structure comprises 32 residues: Kappa-conotoxin SrXIA (32 aa).

4 disulfide bridges follow: Cys-1–Cys-15, Cys-8–Cys-20, Cys-14–Cys-24, and Cys-19–Cys-28. 2 positions are modified to 4-carboxyglutamate: Glu-9 and Glu-10. Pro-32 bears the Proline amide mark.

The protein belongs to the conotoxin I2 superfamily. As to expression, expressed by the venom duct.

Its subcellular location is the secreted. Kappa-conotoxins bind and inhibit voltage-gated potassium channels. This toxin inhibits Kv1.2/KCNA2 and Kv1.6/KCNA6. Produces stiffening of body, limbs and tail when injected intracranially into mice. The protein is Kappa-conotoxin SrXIA of Conus spurius (Alphabet cone).